The chain runs to 480 residues: Cytochrome b-c1 complex subunit 1, mitochondrial (480 aa).

The transit peptide at 1–34 (MAASVVCRAATAGAQVLLRARRSPALLRTPALRS) directs the protein to the mitochondrion. N6-acetyllysine occurs at positions 111 and 138. At lysine 163 the chain carries N6-acetyllysine; alternate. N6-succinyllysine; alternate is present on lysine 163. Phosphoserine is present on serine 212. Position 248 is an N6-acetyllysine (lysine 248).

This sequence belongs to the peptidase M16 family. UQCRC1/QCR1 subfamily. Component of the ubiquinol-cytochrome c oxidoreductase (cytochrome b-c1 complex, complex III, CIII), a multisubunit enzyme composed of 11 subunits. The complex is composed of 3 respiratory subunits cytochrome b, cytochrome c1 and Rieske protein UQCRFS1, 2 core protein subunits UQCRC1/QCR1 and UQCRC2/QCR2, and 6 low-molecular weight protein subunits UQCRH/QCR6, UQCRB/QCR7, UQCRQ/QCR8, UQCR10/QCR9, UQCR11/QCR10 and subunit 9, the cleavage product of Rieske protein UQCRFS1. The complex exists as an obligatory dimer and forms supercomplexes (SCs) in the inner mitochondrial membrane with NADH-ubiquinone oxidoreductase (complex I, CI) and cytochrome c oxidase (complex IV, CIV), resulting in different assemblies (supercomplex SCI(1)III(2)IV(1) and megacomplex MCI(2)III(2)IV(2)). Interacts with UQCC6. Interacts with STMP1. In terms of tissue distribution, expressed in brain, including substantia nigra, striatum, cortex and cerebellum, and in spinal cord, heart, kidney, liver and muscle.

It localises to the mitochondrion inner membrane. Component of the ubiquinol-cytochrome c oxidoreductase, a multisubunit transmembrane complex that is part of the mitochondrial electron transport chain which drives oxidative phosphorylation. The respiratory chain contains 3 multisubunit complexes succinate dehydrogenase (complex II, CII), ubiquinol-cytochrome c oxidoreductase (cytochrome b-c1 complex, complex III, CIII) and cytochrome c oxidase (complex IV, CIV), that cooperate to transfer electrons derived from NADH and succinate to molecular oxygen, creating an electrochemical gradient over the inner membrane that drives transmembrane transport and the ATP synthase. The cytochrome b-c1 complex catalyzes electron transfer from ubiquinol to cytochrome c, linking this redox reaction to translocation of protons across the mitochondrial inner membrane, with protons being carried across the membrane as hydrogens on the quinol. In the process called Q cycle, 2 protons are consumed from the matrix, 4 protons are released into the intermembrane space and 2 electrons are passed to cytochrome c. The 2 core subunits UQCRC1/QCR1 and UQCRC2/QCR2 are homologous to the 2 mitochondrial-processing peptidase (MPP) subunits beta-MPP and alpha-MPP respectively, and they seem to have preserved their MPP processing properties. May be involved in the in situ processing of UQCRFS1 into the mature Rieske protein and its mitochondrial targeting sequence (MTS)/subunit 9 when incorporated into complex III. Seems to play an important role in the maintenance of proper mitochondrial function in nigral dopaminergic neurons. This Homo sapiens (Human) protein is Cytochrome b-c1 complex subunit 1, mitochondrial (UQCRC1).